We begin with the raw amino-acid sequence, 458 residues long: NADH-ubiquinone oxidoreductase chain 4 (458 aa).

The next 13 helical transmembrane spans lie at 22-42, 63-83, 96-116, 117-137, 150-170, 194-214, 224-244, 257-277, 284-306, 311-333, 350-370, 391-413, and 434-454; these read FFWT…FIFT, MISA…ALAS, LLYI…FLST, NLMN…LIIF, IYLS…LLFL, ILWL…GFHL, TIAG…YGMI, LSLI…FICL, ALIA…TLSL, GAFI…ANSN, MLLP…LAMP, LTFP…MFML, and LTLF…NMII.

Belongs to the complex I subunit 4 family.

Its subcellular location is the mitochondrion membrane. The enzyme catalyses a ubiquinone + NADH + 5 H(+)(in) = a ubiquinol + NAD(+) + 4 H(+)(out). In terms of biological role, core subunit of the mitochondrial membrane respiratory chain NADH dehydrogenase (Complex I) that is believed to belong to the minimal assembly required for catalysis. Complex I functions in the transfer of electrons from NADH to the respiratory chain. The immediate electron acceptor for the enzyme is believed to be ubiquinone. In Myxine glutinosa (Atlantic hagfish), this protein is NADH-ubiquinone oxidoreductase chain 4 (MT-ND4).